A 453-amino-acid chain; its full sequence is Autophagy-related protein 18 (453 aa).

WD repeat units lie at residues 9–49 (KSSN…YTNN), 204–244 (AHKT…KLHQ), and 249–288 (SYAA…GAGA). Residues 245 to 249 (FRRGS) carry the L/FRRG motif motif. Residues 284-324 (AGAGAKGRSSSNGGESPSLNSFDGSSDSSSPPGSTTNATRG) form a disordered region. Positions 289–320 (KGRSSSNGGESPSLNSFDGSSDSSSPPGSTTN) are enriched in low complexity.

The protein belongs to the WD repeat PROPPIN family. Component of the PI(3,5)P2 regulatory complex.

Its subcellular location is the preautophagosomal structure membrane. The protein resides in the vacuole membrane. The protein localises to the endosome membrane. In terms of biological role, the PI(3,5)P2 regulatory complex regulates both the synthesis and turnover of phosphatidylinositol 3,5-bisphosphate (PtdIns(3,5)P2). Necessary for proper vacuole morphology. Plays an important role in osmotically-induced vacuole fragmentation. Required for cytoplasm to vacuole transport (Cvt) vesicle formation, pexophagy and starvation-induced autophagy. Involved in correct ATG9 trafficking to the pre-autophagosomal structure. Might also be involved in premeiotic DNA replication. This is Autophagy-related protein 18 (ATG18) from Mycosarcoma maydis (Corn smut fungus).